The chain runs to 261 residues: Ribosome biogenesis protein C3_06160C_A (261 aa).

Residues methionine 1–aspartate 38 form a disordered region. Short sequence motifs (nuclear localization signal) lie at residues isoleucine 11 to leucine 18 and alanine 51 to lysine 58. Basic and acidic residues predominate over residues arginine 17–lysine 37. Residues valine 59–glutamate 85 are disordered.

The protein belongs to the eukaryotic ribosomal protein eS8 family. Ribosome biogenesis protein NSA2 subfamily. In terms of assembly, component of the pre-66S ribosomal particle. Interacts with NOP7 and RRP1. Interacts with RSA4 (via WD repeats).

Its subcellular location is the nucleus. The protein localises to the nucleolus. Functionally, involved in the biogenesis of the 60S ribosomal subunit. May play a part in the quality control of pre-60S particles. This Candida albicans (strain SC5314 / ATCC MYA-2876) (Yeast) protein is Ribosome biogenesis protein C3_06160C_A.